The chain runs to 104 residues: N(4)-acetylcytidine amidohydrolase (104 aa).

In terms of domain architecture, ASCH spans 6-94; the sequence is ITFFQRFQND…IAEIYPNQTQ (89 aa). K21 serves as the catalytic Proton acceptor. T24 acts as the Nucleophile in catalysis. The Proton donor role is filled by E74.

It belongs to the N(4)-acetylcytidine amidohydrolase family.

It carries out the reaction N(4)-acetylcytidine + H2O = cytidine + acetate + H(+). The enzyme catalyses N(4)-acetyl-2'-deoxycytidine + H2O = 2'-deoxycytidine + acetate + H(+). It catalyses the reaction N(4)-acetylcytosine + H2O = cytosine + acetate + H(+). In terms of biological role, catalyzes the hydrolysis of N(4)-acetylcytidine (ac4C). The polypeptide is N(4)-acetylcytidine amidohydrolase (yqfB) (Salmonella agona (strain SL483)).